Reading from the N-terminus, the 385-residue chain is Neuropeptide Y receptor type 2 (385 aa).

Topologically, residues 1–54 (MGPLEAIGEENQTDEMKMELFTKLYLPRYTTPVSELALDPKPELKDSTTLVEVQ) are extracellular. A glycan (N-linked (GlcNAc...) asparagine) is linked at N11. Residues 55-75 (IILIFAYCSIILLGVIGNSLV) traverse the membrane as a helical segment. At 76–90 (IHVIIKFKSMRTVTN) the chain is on the cytoplasmic side. Residues 91-111 (FFIANLAVADLLVNTLCLPFT) traverse the membrane as a helical segment. The Extracellular portion of the chain corresponds to 112-128 (LVYTLLGEWKLGPVLCH). Cysteines 127 and 207 form a disulfide. The chain crosses the membrane as a helical span at residues 129 to 149 (LVPYAQALAVHVSTVTLTVIA). Residues 150 to 169 (LDRHRCIVYHLESKISKRIS) lie on the Cytoplasmic side of the membrane. The helical transmembrane segment at 170 to 190 (FLIIGVAWAVSALLASPLAIF) threads the bilayer. Residues 191-221 (REYSLIEIIPDFKIVVCSEKWPGEGQLNYGT) are Extracellular-facing. A helical transmembrane segment spans residues 222–242 (IYSVSMLLIQYVLPLAIISYA). Residues 243–273 (YTRIWTKLKNHVSPGAGNDHYHHRRQKTTKM) are Cytoplasmic-facing. A helical membrane pass occupies residues 274 to 294 (LVCVVVVFAVSWLPFHAFQLV). Topologically, residues 295 to 308 (SDIDSQVLDLKEYK) are extracellular. The helical transmembrane segment at 309 to 329 (LIYTVFHVIAMCSTFANPLLY) threads the bilayer. Over 330-385 (GWMNNNYRTAFLTAFQCEQRLDSIHPEVSAAFKARKKLEAKKSQFPGDSFTQPTNV) the chain is Cytoplasmic. The S-palmitoyl cysteine moiety is linked to residue C346.

The protein belongs to the G-protein coupled receptor 1 family.

The protein localises to the cell membrane. Its function is as follows. Receptor for neuropeptide Y and peptide YY. The sequence is that of Neuropeptide Y receptor type 2 (NPY2R) from Gallus gallus (Chicken).